A 123-amino-acid polypeptide reads, in one-letter code: Fluoride-specific ion channel FluC (123 aa).

Helical transmembrane passes span 4–24 (VYIA…SGWV), 31–51 (ALPY…GLLM), 64–83 (IRMG…STFS), and 100–120 (ANIL…IFLA). 2 residues coordinate Na(+): Gly-74 and Thr-77.

Belongs to the fluoride channel Fluc/FEX (TC 1.A.43) family.

The protein resides in the cell inner membrane. It catalyses the reaction fluoride(in) = fluoride(out). With respect to regulation, na(+) is not transported, but it plays an essential structural role and its presence is essential for fluoride channel function. Functionally, fluoride-specific ion channel. Important for reducing fluoride concentration in the cell, thus reducing its toxicity. In Syntrophotalea carbinolica (strain DSM 2380 / NBRC 103641 / GraBd1) (Pelobacter carbinolicus), this protein is Fluoride-specific ion channel FluC.